A 294-amino-acid polypeptide reads, in one-letter code: Glyceraldehyde-3-phosphate dehydrogenase (294 aa).

NAD(+) contacts are provided by Asp19, Arg63, and Thr105. Residues 134–136 (SCT) and Thr165 each bind D-glyceraldehyde 3-phosphate. Cys135 functions as the Nucleophile in the catalytic mechanism. Lys177 is subject to N6-acetyllysine. D-glyceraldehyde 3-phosphate is bound by residues 194-195 (TG) and Arg217. Position 234 is an N6-acetyllysine (Lys234).

Belongs to the glyceraldehyde-3-phosphate dehydrogenase family. In terms of assembly, homotetramer.

The protein localises to the cytoplasm. It carries out the reaction D-glyceraldehyde 3-phosphate + phosphate + NAD(+) = (2R)-3-phospho-glyceroyl phosphate + NADH + H(+). It functions in the pathway carbohydrate degradation; glycolysis; pyruvate from D-glyceraldehyde 3-phosphate: step 1/5. Its function is as follows. Catalyzes the oxidative phosphorylation of glyceraldehyde 3-phosphate (G3P) to 1,3-bisphosphoglycerate (BPG) using the cofactor NAD. The first reaction step involves the formation of a hemiacetal intermediate between G3P and a cysteine residue, and this hemiacetal intermediate is then oxidized to a thioester, with concomitant reduction of NAD to NADH. The reduced NADH is then exchanged with the second NAD, and the thioester is attacked by a nucleophilic inorganic phosphate to produce BPG. This chain is Glyceraldehyde-3-phosphate dehydrogenase (gap), found in Pseudescherichia vulneris (Escherichia vulneris).